We begin with the raw amino-acid sequence, 898 residues long: Transportin-1 (898 aa).

The residue at position 1 (Met-1) is an N-acetylmethionine. HEAT repeat units lie at residues Gly-19–Glu-46, Tyr-51–Gln-89, Phe-98–Leu-131, Leu-137–Asp-174, Asn-181–Ile-211, Phe-224–Leu-251, His-263–Thr-290, Pro-306–Val-397, His-405–Ala-433, Pro-445–Arg-472, Leu-486–Ala-519, Leu-527–Val-560, Glu-568–Gln-606, Glu-614–Gly-665, Ile-676–Phe-707, Ala-715–Gly-748, Pro-756–Pro-791, Gln-799–Asn-832, Ile-841–Val-872, and Glu-875–Phe-895. The region spanning Val-41–Asp-109 is the Importin N-terminal domain. Residues Phe-347–Asp-374 form a disordered region. Positions Asp-360 to Asp-374 are enriched in acidic residues.

This sequence belongs to the importin beta family. Importin beta-2 subfamily. In terms of assembly, identified in a complex that contains TNPO1, RAN and RANBP1. Binds HNRPA1, HNRPA2, HNRNPDL, RPS7, RPL5 and RAN. Interacts with H2A, H2B, H3 and H4 histones. Interacts with isoform 1 and isoform 5 of ADAR/ADAR1 (via DRBM 3 domain). Interacts with SNAI1 (via zinc fingers); the interaction mediates SNAI1 nuclear import. Interacts with SNAI2 (via zinc fingers). Interacts with RPL23A (via BIB domain) and SRP19; this interaction is involved in RPL23A and SRP19 import into the nucleus. Interacts (via HEAT repeats 8-12) with BAP1 (via non-classical PY-NLS); this interaction is direct, is involved in BAP1 nuclear import and disrupts BAP1 homodimerization. (Microbial infection) Binds to HIV-1 Rev.

It is found in the cytoplasm. The protein localises to the nucleus. Functions in nuclear protein import as nuclear transport receptor. Serves as receptor for nuclear localization signals (NLS) in cargo substrates. May mediate docking of the importin/substrate complex to the nuclear pore complex (NPC) through binding to nucleoporin and the complex is subsequently translocated through the pore by an energy requiring, Ran-dependent mechanism. At the nucleoplasmic side of the NPC, Ran binds to the importin, the importin/substrate complex dissociates and importin is re-exported from the nucleus to the cytoplasm where GTP hydrolysis releases Ran. The directionality of nuclear import is thought to be conferred by an asymmetric distribution of the GTP- and GDP-bound forms of Ran between the cytoplasm and nucleus. Involved in nuclear import of M9-containing proteins. In vitro, binds directly to the M9 region of the heterogeneous nuclear ribonucleoproteins (hnRNP), A1 and A2 and mediates their nuclear import. Involved in hnRNP A1/A2 nuclear export. Mediates the nuclear import of ribosomal proteins RPL23A, RPS7 and RPL5. In vitro, mediates nuclear import of H2A, H2B, H3 and H4 histones. In vitro, mediates nuclear import of SRP19. Mediates nuclear import of ADAR/ADAR1 isoform 1 and isoform 5 in a RanGTP-dependent manner. Main mediator of PR-DUB complex component BAP1 nuclear import; acts redundantly with the karyopherins KPNA1 and KPNA2. In terms of biological role, (Microbial infection) In case of HIV-1 infection, binds and mediates the nuclear import of HIV-1 Rev. This chain is Transportin-1 (TNPO1), found in Homo sapiens (Human).